The primary structure comprises 554 residues: Dihydroxy-acid dehydratase (554 aa).

Position 78 (Asp-78) interacts with Mg(2+). Cys-119 serves as a coordination point for [2Fe-2S] cluster. 2 residues coordinate Mg(2+): Asp-120 and Lys-121. Lys-121 bears the N6-carboxylysine mark. Cys-192 contributes to the [2Fe-2S] cluster binding site. Position 443 (Glu-443) interacts with Mg(2+). Ser-469 functions as the Proton acceptor in the catalytic mechanism.

It belongs to the IlvD/Edd family. As to quaternary structure, homodimer. Requires [2Fe-2S] cluster as cofactor. It depends on Mg(2+) as a cofactor.

It catalyses the reaction (2R)-2,3-dihydroxy-3-methylbutanoate = 3-methyl-2-oxobutanoate + H2O. The enzyme catalyses (2R,3R)-2,3-dihydroxy-3-methylpentanoate = (S)-3-methyl-2-oxopentanoate + H2O. It functions in the pathway amino-acid biosynthesis; L-isoleucine biosynthesis; L-isoleucine from 2-oxobutanoate: step 3/4. It participates in amino-acid biosynthesis; L-valine biosynthesis; L-valine from pyruvate: step 3/4. Its function is as follows. Functions in the biosynthesis of branched-chain amino acids. Catalyzes the dehydration of (2R,3R)-2,3-dihydroxy-3-methylpentanoate (2,3-dihydroxy-3-methylvalerate) into 2-oxo-3-methylpentanoate (2-oxo-3-methylvalerate) and of (2R)-2,3-dihydroxy-3-methylbutanoate (2,3-dihydroxyisovalerate) into 2-oxo-3-methylbutanoate (2-oxoisovalerate), the penultimate precursor to L-isoleucine and L-valine, respectively. This Shouchella clausii (strain KSM-K16) (Alkalihalobacillus clausii) protein is Dihydroxy-acid dehydratase.